A 450-amino-acid chain; its full sequence is Serine/threonine-protein kinase-transforming protein Rmil (450 aa).

Basic and acidic residues-rich tracts occupy residues 1 to 14 and 49 to 73; these read MEAV…DQGV and QRER…RDSS. Positions 1-80 are disordered; the sequence is MEAVIKDLIR…DSSDDWEIPD (80 aa). Residues 83–343 enclose the Protein kinase domain; it reads ITVGQRIGSG…PQILASIELL (261 aa). Residues 89-97 and lysine 109 contribute to the ATP site; that span reads IGSGSFGTV. Aspartate 202 (proton acceptor) is an active-site residue.

This sequence belongs to the protein kinase superfamily. TKL Ser/Thr protein kinase family. RAF subfamily.

The enzyme catalyses L-seryl-[protein] + ATP = O-phospho-L-seryl-[protein] + ADP + H(+). It carries out the reaction L-threonyl-[protein] + ATP = O-phospho-L-threonyl-[protein] + ADP + H(+). The chain is Serine/threonine-protein kinase-transforming protein Rmil (V-RMIL) from Avian rous-associated virus type 1.